Here is a 776-residue protein sequence, read N- to C-terminus: DNA topoisomerase 1 (776 aa).

Positions 1–111 constitute a Toprim domain; sequence MKLVIVESPA…VKSDDFFKRV (111 aa). Mg(2+) is bound by residues E7 and D80. The Topo IA-type catalytic domain maps to 132–568; it reads DTNLVNAQQA…FWSGFNHNIE (437 aa). Residues 166-171 are interaction with DNA; it reads SAGRVQ. Y304 serves as the catalytic O-(5'-phospho-DNA)-tyrosine intermediate. The C4-type zinc finger occupies 600–627; the sequence is CPSCNTGELSLKLGKFGAFLACSNYPEC.

This sequence belongs to the type IA topoisomerase family. In terms of assembly, monomer. Mg(2+) serves as cofactor.

It catalyses the reaction ATP-independent breakage of single-stranded DNA, followed by passage and rejoining.. Releases the supercoiling and torsional tension of DNA, which is introduced during the DNA replication and transcription, by transiently cleaving and rejoining one strand of the DNA duplex. Introduces a single-strand break via transesterification at a target site in duplex DNA. The scissile phosphodiester is attacked by the catalytic tyrosine of the enzyme, resulting in the formation of a DNA-(5'-phosphotyrosyl)-enzyme intermediate and the expulsion of a 3'-OH DNA strand. The free DNA strand then undergoes passage around the unbroken strand, thus removing DNA supercoils. Finally, in the religation step, the DNA 3'-OH attacks the covalent intermediate to expel the active-site tyrosine and restore the DNA phosphodiester backbone. In Rickettsia conorii (strain ATCC VR-613 / Malish 7), this protein is DNA topoisomerase 1.